Here is a 195-residue protein sequence, read N- to C-terminus: Large ribosomal subunit protein mL58 (195 aa).

The transit peptide at 1-18 (MIGRGVCCRSFHTAGSAW) directs the protein to the mitochondrion.

This sequence belongs to the mitochondrion-specific ribosomal protein mL58 family. In terms of assembly, component of the mitochondrial large ribosomal subunit (mt-LSU). Mature yeast 74S mitochondrial ribosomes consist of a small (37S) and a large (54S) subunit. The 37S small subunit contains a 15S ribosomal RNA (15S mt-rRNA) and 34 different proteins. The 54S large subunit contains a 21S rRNA (21S mt-rRNA) and 46 different proteins.

It localises to the mitochondrion. Its function is as follows. Component of the mitochondrial ribosome (mitoribosome), a dedicated translation machinery responsible for the synthesis of mitochondrial genome-encoded proteins, including at least some of the essential transmembrane subunits of the mitochondrial respiratory chain. The mitoribosomes are attached to the mitochondrial inner membrane and translation products are cotranslationally integrated into the membrane. The polypeptide is Large ribosomal subunit protein mL58 (MRPL20) (Saccharomyces cerevisiae (strain ATCC 204508 / S288c) (Baker's yeast)).